A 140-amino-acid chain; its full sequence is Large ribosomal subunit protein uL11 (140 aa).

Belongs to the universal ribosomal protein uL11 family. As to quaternary structure, part of the ribosomal stalk of the 50S ribosomal subunit. Interacts with L10 and the large rRNA to form the base of the stalk. L10 forms an elongated spine to which L12 dimers bind in a sequential fashion forming a multimeric L10(L12)X complex. Post-translationally, one or more lysine residues are methylated.

Its function is as follows. Forms part of the ribosomal stalk which helps the ribosome interact with GTP-bound translation factors. The chain is Large ribosomal subunit protein uL11 from Staphylococcus saprophyticus subsp. saprophyticus (strain ATCC 15305 / DSM 20229 / NCIMB 8711 / NCTC 7292 / S-41).